Reading from the N-terminus, the 357-residue chain is Peptide chain release factor 1 (357 aa).

Gln232 is subject to N5-methylglutamine.

Belongs to the prokaryotic/mitochondrial release factor family. In terms of processing, methylated by PrmC. Methylation increases the termination efficiency of RF1.

The protein resides in the cytoplasm. Peptide chain release factor 1 directs the termination of translation in response to the peptide chain termination codons UAG and UAA. This is Peptide chain release factor 1 from Oleidesulfovibrio alaskensis (strain ATCC BAA-1058 / DSM 17464 / G20) (Desulfovibrio alaskensis).